The chain runs to 189 residues: Peptidyl-tRNA hydrolase (189 aa).

Y15 contributes to the tRNA binding site. H20 acts as the Proton acceptor in catalysis. TRNA contacts are provided by F66, N68, and N114.

It belongs to the PTH family. As to quaternary structure, monomer.

The protein resides in the cytoplasm. It catalyses the reaction an N-acyl-L-alpha-aminoacyl-tRNA + H2O = an N-acyl-L-amino acid + a tRNA + H(+). In terms of biological role, hydrolyzes ribosome-free peptidyl-tRNAs (with 1 or more amino acids incorporated), which drop off the ribosome during protein synthesis, or as a result of ribosome stalling. Its function is as follows. Catalyzes the release of premature peptidyl moieties from peptidyl-tRNA molecules trapped in stalled 50S ribosomal subunits, and thus maintains levels of free tRNAs and 50S ribosomes. In Streptococcus pneumoniae (strain P1031), this protein is Peptidyl-tRNA hydrolase.